We begin with the raw amino-acid sequence, 857 residues long: DNA mismatch repair protein MutS (857 aa).

Residue 603–610 (GPNMAGKS) coordinates ATP.

This sequence belongs to the DNA mismatch repair MutS family.

This protein is involved in the repair of mismatches in DNA. It is possible that it carries out the mismatch recognition step. This protein has a weak ATPase activity. In Methanothrix thermoacetophila (strain DSM 6194 / JCM 14653 / NBRC 101360 / PT) (Methanosaeta thermophila), this protein is DNA mismatch repair protein MutS.